Consider the following 418-residue polypeptide: UDP-N-acetylglucosamine 1-carboxyvinyltransferase (418 aa).

22 to 23 (KN) serves as a coordination point for phosphoenolpyruvate. Residue arginine 93 participates in UDP-N-acetyl-alpha-D-glucosamine binding. Cysteine 117 acts as the Proton donor in catalysis. 2-(S-cysteinyl)pyruvic acid O-phosphothioketal is present on cysteine 117. Aspartate 306 and isoleucine 328 together coordinate UDP-N-acetyl-alpha-D-glucosamine.

It belongs to the EPSP synthase family. MurA subfamily.

The protein resides in the cytoplasm. The enzyme catalyses phosphoenolpyruvate + UDP-N-acetyl-alpha-D-glucosamine = UDP-N-acetyl-3-O-(1-carboxyvinyl)-alpha-D-glucosamine + phosphate. Its pathway is cell wall biogenesis; peptidoglycan biosynthesis. Cell wall formation. Adds enolpyruvyl to UDP-N-acetylglucosamine. This chain is UDP-N-acetylglucosamine 1-carboxyvinyltransferase, found in Hydrogenovibrio crunogenus (strain DSM 25203 / XCL-2) (Thiomicrospira crunogena).